A 242-amino-acid chain; its full sequence is Ubiquinone biosynthesis O-methyltransferase (242 aa).

R44, G64, D85, and M129 together coordinate S-adenosyl-L-methionine.

Belongs to the methyltransferase superfamily. UbiG/COQ3 family.

The enzyme catalyses a 3-demethylubiquinol + S-adenosyl-L-methionine = a ubiquinol + S-adenosyl-L-homocysteine + H(+). The catalysed reaction is a 3-(all-trans-polyprenyl)benzene-1,2-diol + S-adenosyl-L-methionine = a 2-methoxy-6-(all-trans-polyprenyl)phenol + S-adenosyl-L-homocysteine + H(+). The protein operates within cofactor biosynthesis; ubiquinone biosynthesis. In terms of biological role, O-methyltransferase that catalyzes the 2 O-methylation steps in the ubiquinone biosynthetic pathway. The polypeptide is Ubiquinone biosynthesis O-methyltransferase (Yersinia pseudotuberculosis serotype O:1b (strain IP 31758)).